The primary structure comprises 191 residues: UPF0312 protein Sputw3181_1309 (191 aa).

Positions 1-22 (MKKQLLSALIGVSLLVPMAASA) are cleaved as a signal peptide.

It belongs to the UPF0312 family. Type 1 subfamily.

Its subcellular location is the periplasm. This Shewanella sp. (strain W3-18-1) protein is UPF0312 protein Sputw3181_1309.